The primary structure comprises 581 residues: ATP-dependent lipid A-core flippase (581 aa).

5 helical membrane passes run 27–47 (VFLAVIGMVGTAATEPVFPAI), 63–83 (MVWLIPMGIVTLFLVRSVIVY), 154–174 (IALIGYLLYLDWKLTLITLAI), 251–271 (MTPITHIAASVAVAIIAFLAL), and 279–299 (GASAGSFISFITAMLMLISPV). An ABC transmembrane type-1 domain is found at 28–311 (FLAVIGMVGT…LATVNPTIQR (284 aa)). The ABC transporter domain maps to 343-579 (ICFDNVSLRY…GSYYANLSRL (237 aa)). An ATP-binding site is contributed by 377 to 384 (GASGGGKS).

Belongs to the ABC transporter superfamily. Lipid exporter (TC 3.A.1.106) family. Homodimer.

The protein localises to the cell inner membrane. The catalysed reaction is ATP + H2O + lipid A-core oligosaccharideSide 1 = ADP + phosphate + lipid A-core oligosaccharideSide 2.. Involved in lipopolysaccharide (LPS) biosynthesis. Translocates lipid A-core from the inner to the outer leaflet of the inner membrane. Transmembrane domains (TMD) form a pore in the inner membrane and the ATP-binding domain (NBD) is responsible for energy generation. The sequence is that of ATP-dependent lipid A-core flippase from Albidiferax ferrireducens (strain ATCC BAA-621 / DSM 15236 / T118) (Rhodoferax ferrireducens).